Reading from the N-terminus, the 119-residue chain is uncharacterized protein (119 aa).

This is an uncharacterized protein from Escherichia coli O157:H7.